Consider the following 406-residue polypeptide: Tyrosine--tRNA ligase (406 aa).

Y35 contacts L-tyrosine. The 'HIGH' region motif lies at 40 to 49; the sequence is PTADSLHVGH. L-tyrosine-binding residues include Y168 and Q172. A 'KMSKS' region motif is present at residues 228 to 232; that stretch reads KMGKT. Residue K231 coordinates ATP. The S4 RNA-binding domain occupies 340-404; the sequence is STVLDIIAKT…RGKKNYNKIE (65 aa).

The protein belongs to the class-I aminoacyl-tRNA synthetase family. TyrS type 1 subfamily. In terms of assembly, homodimer.

Its subcellular location is the cytoplasm. It carries out the reaction tRNA(Tyr) + L-tyrosine + ATP = L-tyrosyl-tRNA(Tyr) + AMP + diphosphate + H(+). Functionally, catalyzes the attachment of tyrosine to tRNA(Tyr) in a two-step reaction: tyrosine is first activated by ATP to form Tyr-AMP and then transferred to the acceptor end of tRNA(Tyr). The protein is Tyrosine--tRNA ligase of Clostridium botulinum (strain Alaska E43 / Type E3).